We begin with the raw amino-acid sequence, 205 residues long: Ribosomal RNA small subunit methyltransferase J (205 aa).

S-adenosyl-L-methionine-binding positions include 56 to 57 (RD), 72 to 73 (ER), and Asp-124.

It belongs to the methyltransferase superfamily. RsmJ family.

It localises to the cytoplasm. It catalyses the reaction guanosine(1516) in 16S rRNA + S-adenosyl-L-methionine = N(2)-methylguanosine(1516) in 16S rRNA + S-adenosyl-L-homocysteine + H(+). Its function is as follows. Specifically methylates the guanosine in position 1516 of 16S rRNA. This Brucella anthropi (strain ATCC 49188 / DSM 6882 / CCUG 24695 / JCM 21032 / LMG 3331 / NBRC 15819 / NCTC 12168 / Alc 37) (Ochrobactrum anthropi) protein is Ribosomal RNA small subunit methyltransferase J.